An 88-amino-acid polypeptide reads, in one-letter code: DNA-directed RNA polymerase subunit omega (88 aa).

It belongs to the RNA polymerase subunit omega family. The RNAP catalytic core consists of 2 alpha, 1 beta, 1 beta' and 1 omega subunit. When a sigma factor is associated with the core the holoenzyme is formed, which can initiate transcription.

It carries out the reaction RNA(n) + a ribonucleoside 5'-triphosphate = RNA(n+1) + diphosphate. Promotes RNA polymerase assembly. Latches the N- and C-terminal regions of the beta' subunit thereby facilitating its interaction with the beta and alpha subunits. This chain is DNA-directed RNA polymerase subunit omega, found in Kineococcus radiotolerans (strain ATCC BAA-149 / DSM 14245 / SRS30216).